We begin with the raw amino-acid sequence, 240 residues long: Glutamine amidotransferase-like protein chry6 (240 aa).

A Glutamine amidotransferase type-1 domain is found at 13–205; it reads NFILDDTGGR…FVASDNPVLV (193 aa). The active-site Nucleophile is cysteine 102. Catalysis depends on residues histidine 185 and glutamate 187.

The protein belongs to the peptidase C26 family.

It participates in pigment biosynthesis. Functionally, glutamine amidotransferase-like protein; part of the gene cluster that mediates the biosynthesis of the yellow pigment chrysogine. Pyruvic acid and anthranilic acid are likely substrates for the nonribosomal peptide synthetase chry1/NRPS14, with pyruvic acid adenylated by the first A domain and anthranilic acid by the second. If pyruvic acid and anthranilic acid are merged and released from chry1/NRPS14 by hydrolysis, a subsequent amidation would lead to 2-pyruvoylaminobenzamide. This process is probably catalyzed by the amidotransferase chry2 using glutamine as amino donor. The dehydrogenase chry5 that has a terminal berberine bridge domain for C-N cyclization could catalyze the cyclization of 2-pyruvoylaminobenzamide to yield acetyl-4(3H)-quinazolidinone. A final reduction of acetyl-4(3H)-quinazolidinone catalyzed by the oxidoreductase chry4 would result in chrysogine. This Gibberella zeae (strain ATCC MYA-4620 / CBS 123657 / FGSC 9075 / NRRL 31084 / PH-1) (Wheat head blight fungus) protein is Glutamine amidotransferase-like protein chry6.